Reading from the N-terminus, the 293-residue chain is 4-hydroxy-tetrahydrodipicolinate synthase (293 aa).

Thr-46 is a pyruvate binding site. Tyr-134 functions as the Proton donor/acceptor in the catalytic mechanism. Lys-162 functions as the Schiff-base intermediate with substrate in the catalytic mechanism. Residue Ile-204 participates in pyruvate binding.

It belongs to the DapA family. Homotetramer; dimer of dimers.

It localises to the cytoplasm. It carries out the reaction L-aspartate 4-semialdehyde + pyruvate = (2S,4S)-4-hydroxy-2,3,4,5-tetrahydrodipicolinate + H2O + H(+). Its pathway is amino-acid biosynthesis; L-lysine biosynthesis via DAP pathway; (S)-tetrahydrodipicolinate from L-aspartate: step 3/4. Catalyzes the condensation of (S)-aspartate-beta-semialdehyde [(S)-ASA] and pyruvate to 4-hydroxy-tetrahydrodipicolinate (HTPA). This Bdellovibrio bacteriovorus (strain ATCC 15356 / DSM 50701 / NCIMB 9529 / HD100) protein is 4-hydroxy-tetrahydrodipicolinate synthase.